The following is a 346-amino-acid chain: Methylthioribose-1-phosphate isomerase (346 aa).

Residues 44–46 (RGA), Arg87, and Gln194 contribute to the substrate site. Asp235 serves as the catalytic Proton donor. 245-246 (NK) serves as a coordination point for substrate.

The protein belongs to the eIF-2B alpha/beta/delta subunits family. MtnA subfamily.

The catalysed reaction is 5-(methylsulfanyl)-alpha-D-ribose 1-phosphate = 5-(methylsulfanyl)-D-ribulose 1-phosphate. It participates in amino-acid biosynthesis; L-methionine biosynthesis via salvage pathway; L-methionine from S-methyl-5-thio-alpha-D-ribose 1-phosphate: step 1/6. Functionally, catalyzes the interconversion of methylthioribose-1-phosphate (MTR-1-P) into methylthioribulose-1-phosphate (MTRu-1-P). This chain is Methylthioribose-1-phosphate isomerase, found in Desulforamulus reducens (strain ATCC BAA-1160 / DSM 100696 / MI-1) (Desulfotomaculum reducens).